Consider the following 1045-residue polypeptide: Elongation factor 3 (1045 aa).

Positions 42, 44, and 83 each coordinate ADP. HEAT repeat units lie at residues 86–123 (PYVVALVPAILEQTGSKDKDVQSAANAALHAVVTAVNP), 125–162 (AVKAVLPHLTKSLSETNKWQEKVAVLSAISALVDQAKS), 166–203 (LRMTELIPVLSEAMWDTKKEVKNAATATMTKATETVEN), 171–209 (LIPVLSEAMWDTKKEVKNAATATMTKATETVENKDIERF), 205–241 (DIERFIPKLIECIANPSEVPETVHLLGATTFVAEVTP), 242–279 (ATLSIMTPLLSRGLAERETPIKRKSAVIIDNMCKLVED), and 285–323 (PFLNKLLPGLKNNFSVIADPEAREVTLRGLKTLRRVGAV). 2 residues coordinate ADP: Thr392 and His396. ABC transporter domains are found at residues 426–641 (EEGE…YYEL) and 667–993 (VKVS…KKED). 4 residues coordinate ADP: Asn703, Glu922, Asn925, and His951. Positions 975–1045 (GHNWVSGQGS…AYVSDDDADF (71 aa)) are disordered. The span at 1020–1031 (RKKKKERMKKKK) shows a compositional bias: basic residues.

Belongs to the ABC transporter superfamily. ABCF family. EF3 subfamily.

It localises to the cytoplasm. The protein resides in the cytosol. The catalysed reaction is ATP + H2O = ADP + phosphate + H(+). The protein operates within protein biosynthesis; polypeptide chain elongation. Its function is as follows. Ribosome-dependent ATPase that functions in cytoplasmic translation elongation. Required for the ATP-dependent release of deacylated tRNA from the ribosomal E-site during protein biosynthesis. Stimulates the eEF1A-dependent binding of aminoacyl-tRNA to the ribosomal A-site, which has reduced affinity for tRNA as long as the E-site is occupied. Assists translation termination by stimulating the release of nascent protein from the ribosome by release factors. This is Elongation factor 3 from Zygosaccharomyces rouxii (strain ATCC 2623 / CBS 732 / NBRC 1130 / NCYC 568 / NRRL Y-229).